Reading from the N-terminus, the 166-residue chain is Large ribosomal subunit protein bL17 (166 aa).

The segment at Pro122–Lys166 is disordered. Residues Lys142–Glu151 show a composition bias toward basic and acidic residues. The segment covering Val152–Lys166 has biased composition (low complexity).

This sequence belongs to the bacterial ribosomal protein bL17 family. In terms of assembly, part of the 50S ribosomal subunit. Contacts protein L32.

This chain is Large ribosomal subunit protein bL17, found in Chlorobium phaeobacteroides (strain BS1).